The chain runs to 468 residues: Uronate isomerase (468 aa).

This sequence belongs to the metallo-dependent hydrolases superfamily. Uronate isomerase family.

The enzyme catalyses D-glucuronate = D-fructuronate. The catalysed reaction is aldehydo-D-galacturonate = keto-D-tagaturonate. The protein operates within carbohydrate metabolism; pentose and glucuronate interconversion. The polypeptide is Uronate isomerase (Phocaeicola vulgatus (strain ATCC 8482 / DSM 1447 / JCM 5826 / CCUG 4940 / NBRC 14291 / NCTC 11154) (Bacteroides vulgatus)).